A 623-amino-acid polypeptide reads, in one-letter code: Bifunctional methionine biosynthesis protein MetXA/MetW (623 aa).

Positions 1 to 17 (MTSGRSTRVTMFESQAS) are enriched in polar residues. Residues 1–30 (MTSGRSTRVTMFESQASMGEPSNEDLSSTD) are disordered. The AB hydrolase-1 domain occupies 77–385 (NAVLVCHAVS…TTNAGHDAFL (309 aa)). Residue Ser-183 is the Nucleophile of the active site. Arg-253 is a binding site for substrate. Catalysis depends on residues Asp-348 and His-381. Asp-382 is a substrate binding site. The interval 417–619 (NVDEESILEI…NADTAVIAFH (203 aa)) is metW.

It in the N-terminal section; belongs to the AB hydrolase superfamily. MetX family. This sequence in the C-terminal section; belongs to the MetW family. As to quaternary structure, homodimer.

It localises to the cytoplasm. The enzyme catalyses L-homoserine + acetyl-CoA = O-acetyl-L-homoserine + CoA. The protein operates within amino-acid biosynthesis; L-methionine biosynthesis via de novo pathway; O-acetyl-L-homoserine from L-homoserine: step 1/1. Transfers an acetyl group from acetyl-CoA to L-homoserine, forming acetyl-L-homoserine. In Rhodopirellula baltica (strain DSM 10527 / NCIMB 13988 / SH1), this protein is Bifunctional methionine biosynthesis protein MetXA/MetW.